The sequence spans 228 residues: Cytochrome c oxidase subunit 2 (228 aa).

Over M1–H26 the chain is Mitochondrial intermembrane. The chain crosses the membrane as a helical span at residues A27 to N48. At N49–E62 the chain is on the mitochondrial matrix side. A helical transmembrane segment spans residues M63 to R82. The Mitochondrial intermembrane segment spans residues L83–S228. Cu cation-binding residues include H161, C196, E198, C200, H204, and M207. E198 contacts Mg(2+).

The protein belongs to the cytochrome c oxidase subunit 2 family. Component of the cytochrome c oxidase (complex IV, CIV), a multisubunit enzyme composed of a catalytic core of 3 subunits and several supernumerary subunits. The complex exists as a monomer or a dimer and forms supercomplexes (SCs) in the inner mitochondrial membrane with ubiquinol-cytochrome c oxidoreductase (cytochrome b-c1 complex, complex III, CIII). Cu cation serves as cofactor.

Its subcellular location is the mitochondrion inner membrane. The catalysed reaction is 4 Fe(II)-[cytochrome c] + O2 + 8 H(+)(in) = 4 Fe(III)-[cytochrome c] + 2 H2O + 4 H(+)(out). Functionally, component of the cytochrome c oxidase, the last enzyme in the mitochondrial electron transport chain which drives oxidative phosphorylation. The respiratory chain contains 3 multisubunit complexes succinate dehydrogenase (complex II, CII), ubiquinol-cytochrome c oxidoreductase (cytochrome b-c1 complex, complex III, CIII) and cytochrome c oxidase (complex IV, CIV), that cooperate to transfer electrons derived from NADH and succinate to molecular oxygen, creating an electrochemical gradient over the inner membrane that drives transmembrane transport and the ATP synthase. Cytochrome c oxidase is the component of the respiratory chain that catalyzes the reduction of oxygen to water. Electrons originating from reduced cytochrome c in the intermembrane space (IMS) are transferred via the dinuclear copper A center (CU(A)) of subunit 2 and heme A of subunit 1 to the active site in subunit 1, a binuclear center (BNC) formed by heme A3 and copper B (CU(B)). The BNC reduces molecular oxygen to 2 water molecules using 4 electrons from cytochrome c in the IMS and 4 protons from the mitochondrial matrix. The chain is Cytochrome c oxidase subunit 2 (mt:CoII) from Drosophila melanogaster (Fruit fly).